The sequence spans 249 residues: MRIDGRKNEQIRHVKVTRHYTKYAEGSVYIEVGDTKVLCNVSIEDKVPPFMKGTGSGWITAEYNMLPRSTETRKIRDIARLKIDGRTMEIQRLIGRALRSVVDLKALGEKTLWIDCDVIQADGGTRTTAISGAFIALVDAVNKLHKIKPFKIYPIRSFVAAVSVGIVNEEKILDLCYQEDSKAKVDMNIIMTDEGSFVEVQGTGEESPYTRTELNELLDLGEKGIKQMINVQKESLKMDSLWIGTGGNN.

Phosphate contacts are provided by residues arginine 86 and 124–126; that span reads GTR.

This sequence belongs to the RNase PH family. As to quaternary structure, homohexameric ring arranged as a trimer of dimers.

It catalyses the reaction tRNA(n+1) + phosphate = tRNA(n) + a ribonucleoside 5'-diphosphate. In terms of biological role, phosphorolytic 3'-5' exoribonuclease that plays an important role in tRNA 3'-end maturation. Removes nucleotide residues following the 3'-CCA terminus of tRNAs; can also add nucleotides to the ends of RNA molecules by using nucleoside diphosphates as substrates, but this may not be physiologically important. Probably plays a role in initiation of 16S rRNA degradation (leading to ribosome degradation) during starvation. In Clostridium botulinum (strain Alaska E43 / Type E3), this protein is Ribonuclease PH.